A 131-amino-acid polypeptide reads, in one-letter code: Putative pre-16S rRNA nuclease (131 aa).

This sequence belongs to the YqgF nuclease family.

It is found in the cytoplasm. Could be a nuclease involved in processing of the 5'-end of pre-16S rRNA. The protein is Putative pre-16S rRNA nuclease of Bordetella avium (strain 197N).